Reading from the N-terminus, the 168-residue chain is Nascent polypeptide-associated complex subunit alpha (168 aa).

One can recognise an NAC-A/B domain in the interval Ser-14–Leu-78. Residues Gln-83–Leu-129 form a disordered region. A compositionally biased stretch (low complexity) spans Ala-100–Ala-115. Residues Leu-129–Lys-168 enclose the UBA domain.

Belongs to the NAC-alpha family. Part of the nascent polypeptide-associated complex (NAC), consisting of EGD2 and EGD1. NAC associates with ribosomes via EGD1.

It is found in the cytoplasm. The protein localises to the nucleus. Its function is as follows. Component of the nascent polypeptide-associated complex (NAC), a dynamic component of the ribosomal exit tunnel, protecting the emerging polypeptides from interaction with other cytoplasmic proteins to ensure appropriate nascent protein targeting. The NAC complex also promotes mitochondrial protein import by enhancing productive ribosome interactions with the outer mitochondrial membrane and blocks the inappropriate interaction of ribosomes translating non-secretory nascent polypeptides with translocation sites in the membrane of the endoplasmic reticulum. EGD2 may also be involved in transcription regulation. The protein is Nascent polypeptide-associated complex subunit alpha (EGD2) of Eremothecium gossypii (strain ATCC 10895 / CBS 109.51 / FGSC 9923 / NRRL Y-1056) (Yeast).